A 369-amino-acid polypeptide reads, in one-letter code: LIM homeobox transcription factor 1-beta (369 aa).

LIM zinc-binding domains are found at residues 23–73 and 82–135; these read CEGC…CKQD and CSGC…CKGD. The tract at residues 143–196 is disordered; sequence LSSVSPDESDSVKSEDEDGDMKPAKGQGSQSKGGGDDGKDPRRPKRPRTILTTQ. The homeobox DNA-binding region spans 186–245; sequence PKRPRTILTTQQRRAFKASFEVSSKPCRKVRETLAAETGLSVRVVQVWFQNQRAKMKKLA.

Interacts with DHX9.

It localises to the nucleus. In terms of biological role, transcription factor involved in the regulation of podocyte-expressed genes. Essential for the specification of dorsal limb fate at both the zeugopodal and autopodal levels. The chain is LIM homeobox transcription factor 1-beta (LMX1B) from Mesocricetus auratus (Golden hamster).